Here is an 834-residue protein sequence, read N- to C-terminus: Taste receptor type 1 member 2 (834 aa).

A signal peptide spans 1–19 (MGPRARTVCFLFFLLWVLA). Residues 20-561 (ELAENSDFHL…SFLEWHEAAT (542 aa)) are Extracellular-facing. N-linked (GlcNAc...) asparagine glycosylation is found at Asn-84, Asn-292, Asn-312, Asn-363, Asn-423, Asn-482, and Asn-522. A helical membrane pass occupies residues 562-582 (IAVALLAALGFLXXXXXXXXX). Topologically, residues 583 to 597 (XXXXXXPMVRSAGGP) are cytoplasmic. A helical membrane pass occupies residues 598–618 (MCFLMLTLLLVAYMVVPVYVG). Topologically, residues 619–630 (PPKVTTCLCRQA) are extracellular. A helical transmembrane segment spans residues 631–651 (LFPVCFTICISCITMRSFQIV). At 652–676 (CVFKMASRFPRAYSYWVRYQGSYVS) the chain is on the cytoplasmic side. The chain crosses the membrane as a helical span at residues 677–697 (VAFITALKVVTVVISLLATGL). Over 698–722 (NPTTRADTDDPKIMIISCNPNYRNS) the chain is Extracellular. A helical membrane pass occupies residues 723-743 (LLFNTSLDLLLSVVGFSFAYM). Residues 744 to 755 (GKELPTNYNEAK) lie on the Cytoplasmic side of the membrane. Residues 756 to 776 (FITFSMTFYFTSSVSLCTFMS) form a helical membrane-spanning segment. Over 777-779 (VYD) the chain is Extracellular. Residues 780–800 (GVLVTIVDLLVTVFNLLAISL) traverse the membrane as a helical segment. At 801–834 (GYFGPKCYMILFYPERNTPAYFNSMIQGYTMRRD) the chain is on the cytoplasmic side.

This sequence belongs to the G-protein coupled receptor 3 family. TAS1R subfamily. In terms of assembly, forms heterodimers with TAS1R3.

The protein localises to the cell membrane. In terms of biological role, putative taste receptor. TAS1R2/TAS1R3 recognizes diverse natural and synthetic sweeteners. The polypeptide is Taste receptor type 1 member 2 (TAS1R2) (Cebuella pygmaea (Pygmy marmoset)).